Reading from the N-terminus, the 183-residue chain is Der GTPase-activating protein YihI (183 aa).

Positions 1–18 (MNQPSKAPRAPRSSAATP) are enriched in low complexity. The tract at residues 1–114 (MNQPSKAPRA…EEELAKLEND (114 aa)) is disordered. A compositionally biased stretch (basic and acidic residues) spans 25–34 (RAELDQEARE). Low complexity predominate over residues 56–65 (NQKNKAAAQA). The segment covering 92–114 (PKAEAKPKPRLTPEEELAKLEND) has biased composition (basic and acidic residues).

This sequence belongs to the YihI family. Interacts with Der.

Functionally, a GTPase-activating protein (GAP) that modifies Der/EngA GTPase function. May play a role in ribosome biogenesis. This Serratia proteamaculans (strain 568) protein is Der GTPase-activating protein YihI.